The primary structure comprises 61 residues: Photosystem II reaction center protein K (61 aa).

Residues Met-1 to Ala-24 constitute a propeptide that is removed on maturation. A helical membrane pass occupies residues Ile-36–Ala-56.

This sequence belongs to the PsbK family. As to quaternary structure, PSII is composed of 1 copy each of membrane proteins PsbA, PsbB, PsbC, PsbD, PsbE, PsbF, PsbH, PsbI, PsbJ, PsbK, PsbL, PsbM, PsbT, PsbX, PsbY, PsbZ, Psb30/Ycf12, at least 3 peripheral proteins of the oxygen-evolving complex and a large number of cofactors. It forms dimeric complexes.

The protein localises to the plastid. It is found in the chloroplast thylakoid membrane. One of the components of the core complex of photosystem II (PSII). PSII is a light-driven water:plastoquinone oxidoreductase that uses light energy to abstract electrons from H(2)O, generating O(2) and a proton gradient subsequently used for ATP formation. It consists of a core antenna complex that captures photons, and an electron transfer chain that converts photonic excitation into a charge separation. This Glycine max (Soybean) protein is Photosystem II reaction center protein K.